Here is a 445-residue protein sequence, read N- to C-terminus: Acetylcholine-gated chloride channel subunit acc-2 (445 aa).

Positions 1 to 26 (MIFTLLSTLPVLIITTELDYSELVHS) are cleaved as a signal peptide. At 27–258 (AELVSSSSYI…LHVTIIFERR (232 aa)) the chain is on the extracellular side. N-linked (GlcNAc...) asparagine glycosylation is found at Asn46, Asn59, Asn121, and Asn162. A disulfide bridge links Cys177 with Cys191. Residue Asn218 is glycosylated (N-linked (GlcNAc...) asparagine). Residues 259 to 279 (FIWYFMQAYLPTYLTIFISWI) traverse the membrane as a helical segment. Over 280 to 286 (SFSLGSR) the chain is Cytoplasmic. Residues 287-307 (AIPARTMLGVNSLLAIVFSFG) traverse the membrane as a helical segment. The Extracellular portion of the chain corresponds to 308–326 (NIMRNLPRVSYIKGIDVWM). Residues 327-347 (LVSMTFIFCSLLELAIVGFMV) form a helical membrane-spanning segment. At 348–407 (RDETVAKKKQQKKISGNISREESPHGIISERRFMFPPGCSESSKSLSSCTSGWTPERIDS) the chain is on the cytoplasmic side. Residues 408–428 (ISSVMFPFSFFVFNIIYWFYY) form a helical membrane-spanning segment. Over 429-445 (IHRKEIIKQNLINRVDG) the chain is Extracellular.

Belongs to the ligand-gated ion channel (TC 1.A.9) family. In terms of assembly, homopentamer (in vitro). May interact with either acc-3 or acc-4; the interactions do not result in significant heteropentameric ion channel activity. In terms of tissue distribution, expressed in RIA, RIG, PHA and AIZ glutamatergic neurons, URX and RIH cholinergic neurons, and in male-specific MCM neurons.

It localises to the cell membrane. Its function is as follows. Acetylcholine-gated chloride channel subunit. Currents in channels are triggered in response to acetylcholine. Channel properties may be modulated by the formation of homomeric and heteromeric channels. In Caenorhabditis elegans, this protein is Acetylcholine-gated chloride channel subunit acc-2.